Consider the following 81-residue polypeptide: Small ribosomal subunit protein uS17 (81 aa).

It belongs to the universal ribosomal protein uS17 family. Part of the 30S ribosomal subunit.

Its function is as follows. One of the primary rRNA binding proteins, it binds specifically to the 5'-end of 16S ribosomal RNA. This is Small ribosomal subunit protein uS17 from Protochlamydia amoebophila (strain UWE25).